A 255-amino-acid chain; its full sequence is Myogenic factor 5 (255 aa).

Residues 83 to 134 (DRRKAATMRERRRLKKVNQAFETLKRCTTTNPNQRLPKVEILRNAIRYIESL) enclose the bHLH domain. The disordered stretch occupies residues 226–249 (DTASLSPATSANSQPATPGPSSSR).

In terms of assembly, efficient DNA binding requires dimerization with another bHLH protein.

It localises to the nucleus. Its function is as follows. Acts as a transcriptional activator that promotes transcription of muscle-specific target genes and plays a role in muscle differentiation. Together with MYOG and MYOD1, co-occupies muscle-specific gene promoter core region during myogenesis. Induces fibroblasts to differentiate into myoblasts. Probable sequence specific DNA-binding protein. In Mus musculus (Mouse), this protein is Myogenic factor 5 (Myf5).